Reading from the N-terminus, the 568-residue chain is Involucrin (568 aa).

Disordered regions lie at residues Cys-23–Leu-499 and Arg-517–Gln-568. The segment covering Pro-25–Pro-36 has biased composition (low complexity). The segment covering Thr-49 to Gln-77 has biased composition (basic and acidic residues). The segment covering Gln-78 to Val-88 has biased composition (low complexity). Basic and acidic residues predominate over residues Lys-89–Pro-106. Low complexity-rich tracts occupy residues Gln-107–Arg-121, His-133–Leu-154, and Pro-172–Lys-181. Residues Lys-193–His-213 show a composition bias toward basic and acidic residues. Positions Gln-217–His-232 are enriched in low complexity. Composition is skewed to basic and acidic residues over residues Glu-266–Thr-333 and Lys-345–Lys-456. Low complexity predominate over residues Gln-457–Tyr-467. At Ser-472 the chain carries Phosphoserine. Composition is skewed to basic and acidic residues over residues Lys-478 to Leu-499, Arg-517 to Ile-532, and Val-551 to Gln-568.

The protein belongs to the involucrin family. In terms of assembly, directly or indirectly cross-linked to cornifelin (CNFN). In terms of processing, substrate of transglutaminase. Specific glutamines or lysines are cross-linked to keratins, desmoplakin and to inter involucrin molecules. Keratinocytes of epidermis and other stratified squamous epithelia.

Its subcellular location is the cytoplasm. In terms of biological role, part of the insoluble cornified cell envelope (CE) of stratified squamous epithelia. This chain is Involucrin (Ivl), found in Rattus norvegicus (Rat).